Here is a 118-residue protein sequence, read N- to C-terminus: Aspartate 1-decarboxylase 1 (118 aa).

Catalysis depends on Ser25, which acts as the Schiff-base intermediate with substrate; via pyruvic acid. Ser25 is subject to Pyruvic acid (Ser). Residue Thr57 coordinates substrate. Catalysis depends on Tyr58, which acts as the Proton donor. Residue 73–75 coordinates substrate; sequence GAA.

Belongs to the PanD family. As to quaternary structure, heterooctamer of four alpha and four beta subunits. Pyruvate is required as a cofactor. In terms of processing, is synthesized initially as an inactive proenzyme, which is activated by self-cleavage at a specific serine bond to produce a beta-subunit with a hydroxyl group at its C-terminus and an alpha-subunit with a pyruvoyl group at its N-terminus.

The protein localises to the cytoplasm. It carries out the reaction L-aspartate + H(+) = beta-alanine + CO2. Its pathway is cofactor biosynthesis; (R)-pantothenate biosynthesis; beta-alanine from L-aspartate: step 1/1. Catalyzes the pyruvoyl-dependent decarboxylation of aspartate to produce beta-alanine. In Gloeobacter violaceus (strain ATCC 29082 / PCC 7421), this protein is Aspartate 1-decarboxylase 1.